The primary structure comprises 60 residues: Hemocyte defensin Cg-Defh2 (60 aa).

The signal sequence occupies residues 1 to 17 (LLTLAVLLMVSADMAFA). The beta-D-GlcNAc-(1-&gt;4)-Mur2Ac(oyl-L-Ala-gamma-D-Glu-L-Lys-D-Ala-D-Ala)-di-trans,octa-cis-undecaprenyl diphosphate site is built by F19, G20, and C21. Disulfide bonds link C21–C42, C28–C51, C32–C53, and C37–C56. Residues 22–25 (PGDQ) are binds to membrane interface. H31 contacts beta-D-GlcNAc-(1-&gt;4)-Mur2Ac(oyl-L-Ala-gamma-D-Glu-L-Lys-D-Ala-D-Ala)-di-trans,octa-cis-undecaprenyl diphosphate. Residues 43–49 (DAVTLWL) form a binds to membrane interface region. Position 51 (C51) interacts with beta-D-GlcNAc-(1-&gt;4)-Mur2Ac(oyl-L-Ala-gamma-D-Glu-L-Lys-D-Ala-D-Ala)-di-trans,octa-cis-undecaprenyl diphosphate.

This sequence belongs to the invertebrate defensin family. In terms of tissue distribution, expressed in hemocytes.

The protein resides in the secreted. It is found in the target cell membrane. Its function is as follows. Antibacterial peptide mostly active against Gram-positive bacteria. It acts by selectively inhibiting peptidoglycan biosynthesis through complex formation with the cell wall precursor lipid II (1:1 molar ratio) thus inhibiting cell wall synthesis. It does not disrupt cell membranes. Is noticeably more potent than Cg-Defh1. The chain is Hemocyte defensin Cg-Defh2 from Magallana gigas (Pacific oyster).